Consider the following 258-residue polypeptide: Acetylglutamate kinase (258 aa).

Substrate contacts are provided by residues glycine 41–glycine 42, arginine 63, and asparagine 156.

It belongs to the acetylglutamate kinase family. ArgB subfamily. Homodimer.

It localises to the cytoplasm. The catalysed reaction is N-acetyl-L-glutamate + ATP = N-acetyl-L-glutamyl 5-phosphate + ADP. It participates in amino-acid biosynthesis; L-arginine biosynthesis; N(2)-acetyl-L-ornithine from L-glutamate: step 2/4. Its function is as follows. Catalyzes the ATP-dependent phosphorylation of N-acetyl-L-glutamate. This Geobacillus stearothermophilus (Bacillus stearothermophilus) protein is Acetylglutamate kinase.